A 196-amino-acid chain; its full sequence is Peroxiredoxin TSA1-B (196 aa).

Positions 3–161 (PVVQQPAPSF…SLRLLEAFQF (159 aa)) constitute a Thioredoxin domain. 45-47 (TFV) is a binding site for substrate. Catalysis depends on Cys-48, which acts as the Cysteine sulfenic acid (-SOH) intermediate. Residue Arg-124 participates in substrate binding. The interval 173–196 (WHPGDETIKPSPEASKEYFNKVNK) is disordered. Basic and acidic residues predominate over residues 175-196 (PGDETIKPSPEASKEYFNKVNK).

Belongs to the peroxiredoxin family. AhpC/Prx1 subfamily. Homodimer; disulfide-linked, upon oxidation.

It localises to the cell surface. The protein resides in the nucleus. It is found in the cytoplasm. It catalyses the reaction a hydroperoxide + [thioredoxin]-dithiol = an alcohol + [thioredoxin]-disulfide + H2O. Functionally, thiol-specific peroxidase that catalyzes the reduction of hydrogen peroxide and organic hydroperoxides to water and alcohols, respectively. Plays a role in cell protection against oxidative stress by detoxifying peroxides and as sensor of hydrogen peroxide-mediated signaling events. Also involved in the correct composition of the hyphal cell wall. This chain is Peroxiredoxin TSA1-B, found in Candida albicans (strain SC5314 / ATCC MYA-2876) (Yeast).